Consider the following 731-residue polypeptide: 1,4-alpha-glucan branching enzyme GlgB (731 aa).

The Nucleophile role is filled by D411. The active-site Proton donor is the E464.

This sequence belongs to the glycosyl hydrolase 13 family. GlgB subfamily. As to quaternary structure, monomer.

The catalysed reaction is Transfers a segment of a (1-&gt;4)-alpha-D-glucan chain to a primary hydroxy group in a similar glucan chain.. It participates in glycan biosynthesis; glycogen biosynthesis. Its function is as follows. Catalyzes the formation of the alpha-1,6-glucosidic linkages in glycogen by scission of a 1,4-alpha-linked oligosaccharide from growing alpha-1,4-glucan chains and the subsequent attachment of the oligosaccharide to the alpha-1,6 position. The chain is 1,4-alpha-glucan branching enzyme GlgB from Mycobacterium tuberculosis (strain ATCC 25177 / H37Ra).